Here is a 387-residue protein sequence, read N- to C-terminus: Zinc finger protein neuro-d4 (387 aa).

Residues Lys106, Lys129, and Lys133 each participate in a glycyl lysine isopeptide (Lys-Gly) (interchain with G-Cter in SUMO2) cross-link. A C2H2-type zinc finger spans residues 195–218 (YVCDICGKRYKNRPGLSYHYTHTH). PHD-type zinc fingers lie at residues 271 to 328 (NGYC…CKSC) and 325 to 375 (CKSC…CLRH). Positions 274, 277, 293, 296, 301, 304, 322, 325, 328, 331, 343, 346, 351, 354, 369, and 372 each coordinate Zn(2+).

The protein belongs to the requiem/DPF family. Component of neuron-specific chromatin remodeling complex (nBAF complex) composed of at least, ARID1A/BAF250A or ARID1B/BAF250B, SMARCD1/BAF60A, SMARCD3/BAF60C, SMARCA2/BRM/BAF190B, SMARCA4/BRG1/BAF190A, SMARCB1/BAF47, SMARCC1/BAF155, SMARCE1/BAF57, SMARCC2/BAF170, DPF1/BAF45B, DPF3/BAF45C, ACTL6B/BAF53B and actin. In terms of tissue distribution, at embryonic stages, predominant expression in the nervous system. Expressed specifically in postmitotic neurons (at protein level).

The protein localises to the cytoplasm. The protein resides in the nucleus. In terms of biological role, may have an important role in developing neurons by participating in regulation of cell survival, possibly as a neurospecific transcription factor. Belongs to the neuron-specific chromatin remodeling complex (nBAF complex). During neural development a switch from a stem/progenitor to a postmitotic chromatin remodeling mechanism occurs as neurons exit the cell cycle and become committed to their adult state. The transition from proliferating neural stem/progenitor cells to postmitotic neurons requires a switch in subunit composition of the npBAF and nBAF complexes. As neural progenitors exit mitosis and differentiate into neurons, npBAF complexes which contain ACTL6A/BAF53A and PHF10/BAF45A, are exchanged for homologous alternative ACTL6B/BAF53B and DPF1/BAF45B or DPF3/BAF45C subunits in neuron-specific complexes (nBAF). The npBAF complex is essential for the self-renewal/proliferative capacity of the multipotent neural stem cells. The nBAF complex along with CREST plays a role regulating the activity of genes essential for dendrite growth. The polypeptide is Zinc finger protein neuro-d4 (Mus musculus (Mouse)).